Consider the following 100-residue polypeptide: Urease subunit gamma (100 aa).

It belongs to the urease gamma subunit family. Heterotrimer of UreA (gamma), UreB (beta) and UreC (alpha) subunits. Three heterotrimers associate to form the active enzyme.

It is found in the cytoplasm. It catalyses the reaction urea + 2 H2O + H(+) = hydrogencarbonate + 2 NH4(+). Its pathway is nitrogen metabolism; urea degradation; CO(2) and NH(3) from urea (urease route): step 1/1. This is Urease subunit gamma from Tolumonas auensis (strain DSM 9187 / NBRC 110442 / TA 4).